The following is a 468-amino-acid chain: Glutamate--tRNA ligase (468 aa).

A 'HIGH' region motif is present at residues 9-19 (PSPTGYLHVGG). 4 residues coordinate Zn(2+): Cys98, Cys100, Cys125, and Asp127. A 'KMSKS' region motif is present at residues 235 to 239 (KLSKR). Position 238 (Lys238) interacts with ATP.

Belongs to the class-I aminoacyl-tRNA synthetase family. Glutamate--tRNA ligase type 1 subfamily. In terms of assembly, monomer. The cofactor is Zn(2+).

It localises to the cytoplasm. The catalysed reaction is tRNA(Glu) + L-glutamate + ATP = L-glutamyl-tRNA(Glu) + AMP + diphosphate. Functionally, catalyzes the attachment of glutamate to tRNA(Glu) in a two-step reaction: glutamate is first activated by ATP to form Glu-AMP and then transferred to the acceptor end of tRNA(Glu). The sequence is that of Glutamate--tRNA ligase from Idiomarina loihiensis (strain ATCC BAA-735 / DSM 15497 / L2-TR).